Consider the following 435-residue polypeptide: Nuclear hormone receptor family member nhr-136 (435 aa).

A DNA-binding region (nuclear receptor) is located at residues 50–129; that stretch reads PSNCKVCRHS…AGMNPSAIQA (80 aa). NR C4-type zinc fingers lie at residues 53–73 and 89–112; these read CKVCRHSATGYHYDVPSCNGC and CLKMRKCLSGTEPVDLSRRMCRAC. An NR LBD domain is found at 194–430; the sequence is RDIRKLDELI…RYTRISNLYE (237 aa).

This sequence belongs to the nuclear hormone receptor family.

The protein resides in the nucleus. Orphan nuclear receptor. The sequence is that of Nuclear hormone receptor family member nhr-136 (nhr-136) from Caenorhabditis elegans.